The primary structure comprises 431 residues: Serine--tRNA ligase (431 aa).

Positions 41-66 are disordered; that stretch reads QSRTQELQAERNARSKSIGEAARRGE. 240–242 is a binding site for L-serine; sequence TSE. An ATP-binding site is contributed by 271 to 273; sequence RSE. Residue Glu-294 participates in L-serine binding. 358–361 contacts ATP; sequence EISS. Residue Ser-392 participates in L-serine binding.

It belongs to the class-II aminoacyl-tRNA synthetase family. Type-1 seryl-tRNA synthetase subfamily. Homodimer. The tRNA molecule binds across the dimer.

It localises to the cytoplasm. The enzyme catalyses tRNA(Ser) + L-serine + ATP = L-seryl-tRNA(Ser) + AMP + diphosphate + H(+). It carries out the reaction tRNA(Sec) + L-serine + ATP = L-seryl-tRNA(Sec) + AMP + diphosphate + H(+). It participates in aminoacyl-tRNA biosynthesis; selenocysteinyl-tRNA(Sec) biosynthesis; L-seryl-tRNA(Sec) from L-serine and tRNA(Sec): step 1/1. Functionally, catalyzes the attachment of serine to tRNA(Ser). Is also able to aminoacylate tRNA(Sec) with serine, to form the misacylated tRNA L-seryl-tRNA(Sec), which will be further converted into selenocysteinyl-tRNA(Sec). The protein is Serine--tRNA ligase of Aeromonas salmonicida (strain A449).